Here is a 504-residue protein sequence, read N- to C-terminus: Protoporphyrinogen oxidase, mitochondrial (504 aa).

Residues 20 to 25 (GAGVSG), 43 to 44 (EA), Lys-51, and 65 to 68 (GANT) each bind FAD. Residues 213-232 (SPKNEKKQGPPKTSANKKRQ) are disordered. FAD-binding positions include Val-264 and 473-475 (LSV).

This sequence belongs to the protoporphyrinogen/coproporphyrinogen oxidase family. Protoporphyrinogen oxidase subfamily. Requires FAD as cofactor.

The protein localises to the mitochondrion. The enzyme catalyses protoporphyrinogen IX + 3 O2 = protoporphyrin IX + 3 H2O2. The protein operates within porphyrin-containing compound metabolism; protoporphyrin-IX biosynthesis; protoporphyrin-IX from protoporphyrinogen-IX: step 1/1. Inhibited by the herbicide acifluorfen. Its function is as follows. Catalyzes the 6-electron oxidation of protoporphyrinogen-IX to form protoporphyrin-IX. Functionally, provides precursor for the mitochondrial and plastidic heme synthesis and the predominant chlorophyll synthesis in plastids. The polypeptide is Protoporphyrinogen oxidase, mitochondrial (PPXII) (Nicotiana tabacum (Common tobacco)).